The primary structure comprises 542 residues: Chaperonin GroEL (542 aa).

ATP contacts are provided by residues 29 to 32 (TLGP), 86 to 90 (DGTTT), G413, 476 to 478 (NAA), and D492.

This sequence belongs to the chaperonin (HSP60) family. Forms a cylinder of 14 subunits composed of two heptameric rings stacked back-to-back. Interacts with the co-chaperonin GroES.

It localises to the cytoplasm. It carries out the reaction ATP + H2O + a folded polypeptide = ADP + phosphate + an unfolded polypeptide.. Its function is as follows. Together with its co-chaperonin GroES, plays an essential role in assisting protein folding. The GroEL-GroES system forms a nano-cage that allows encapsulation of the non-native substrate proteins and provides a physical environment optimized to promote and accelerate protein folding. This Listeria welshimeri serovar 6b (strain ATCC 35897 / DSM 20650 / CCUG 15529 / CIP 8149 / NCTC 11857 / SLCC 5334 / V8) protein is Chaperonin GroEL.